The primary structure comprises 371 residues: Putative agmatine deiminase (371 aa).

The active-site Amidino-cysteine intermediate is C361.

This sequence belongs to the agmatine deiminase family.

It carries out the reaction agmatine + H2O = N-carbamoylputrescine + NH4(+). This Selenomonas ruminantium protein is Putative agmatine deiminase.